The chain runs to 180 residues: UPF0227 protein YcfP (180 aa).

Belongs to the UPF0227 family.

In Salmonella gallinarum (strain 287/91 / NCTC 13346), this protein is UPF0227 protein YcfP.